The primary structure comprises 127 residues: Aspartate 1-decarboxylase (127 aa).

Residue Ser25 is the Schiff-base intermediate with substrate; via pyruvic acid of the active site. Position 25 is a pyruvic acid (Ser) (Ser25). Residue Thr57 participates in substrate binding. Tyr58 (proton donor) is an active-site residue. 73 to 75 contributes to the substrate binding site; that stretch reads GAA.

It belongs to the PanD family. As to quaternary structure, heterooctamer of four alpha and four beta subunits. Pyruvate is required as a cofactor. In terms of processing, is synthesized initially as an inactive proenzyme, which is activated by self-cleavage at a specific serine bond to produce a beta-subunit with a hydroxyl group at its C-terminus and an alpha-subunit with a pyruvoyl group at its N-terminus.

The protein resides in the cytoplasm. The enzyme catalyses L-aspartate + H(+) = beta-alanine + CO2. Its pathway is cofactor biosynthesis; (R)-pantothenate biosynthesis; beta-alanine from L-aspartate: step 1/1. In terms of biological role, catalyzes the pyruvoyl-dependent decarboxylation of aspartate to produce beta-alanine. This chain is Aspartate 1-decarboxylase, found in Listeria monocytogenes serotype 4b (strain F2365).